We begin with the raw amino-acid sequence, 879 residues long: Alanine--tRNA ligase (879 aa).

4 residues coordinate Zn(2+): His566, His570, Cys668, and His672.

The protein belongs to the class-II aminoacyl-tRNA synthetase family. Requires Zn(2+) as cofactor.

It localises to the cytoplasm. It catalyses the reaction tRNA(Ala) + L-alanine + ATP = L-alanyl-tRNA(Ala) + AMP + diphosphate. Functionally, catalyzes the attachment of alanine to tRNA(Ala) in a two-step reaction: alanine is first activated by ATP to form Ala-AMP and then transferred to the acceptor end of tRNA(Ala). Also edits incorrectly charged Ser-tRNA(Ala) and Gly-tRNA(Ala) via its editing domain. The chain is Alanine--tRNA ligase from Clostridium tetani (strain Massachusetts / E88).